The sequence spans 146 residues: Hut operon positive regulatory protein (146 aa).

It belongs to the HutP family. As to quaternary structure, homohexamer.

Functionally, antiterminator that binds to cis-acting regulatory sequences on the mRNA in the presence of histidine, thereby suppressing transcription termination and activating the hut operon for histidine utilization. The sequence is that of Hut operon positive regulatory protein from Bacillus cytotoxicus (strain DSM 22905 / CIP 110041 / 391-98 / NVH 391-98).